Consider the following 573-residue polypeptide: Pentatricopeptide repeat-containing protein At3g62890 (573 aa).

PPR repeat units follow at residues 23–60 (ESFLWNIIIRAIVHNVSSPQRHSPISVYLRMRNHRVSP), 61–95 (DFHTFPFLLPSFHNPLHLPLGQRTHAQILLFGLDK), 96–126 (DPFVRTSLLNMYSSCGDLRSAQRVFDDSGSK), 127–161 (DLPAWNSVVNAYAKAGLIDDARKLFDEMPERNVIS), 162–188 (WSCLINGYVMCGKYKEALDLFREMQLP), 198–232 (NEFTMSTVLSACGRLGALEQGKWVHAYIDKYHVEI), 233–263 (DIVLGTALIDMYAKCGSLERAKRVFNALGSK), 265–295 (DVKAYSAMICCLAMYGLTDECFQLFSEMTTS), 301–336 (NSVTFVGILGACVHRGLINEGKSYFKMMIEEFGITP), and 337–367 (SIQHYGCMVDLYGRSGLIKEAESFIASMPME). The tract at residues 372 to 447 (IWGSLLSGSR…VPGCSYVEVE (76 aa)) is type E motif; degenerate. Residues 448–478 (GVVHEFVVGDESQQESERIYAMLDEIMQRLR) are type E(+) motif. Positions 479–573 (EAGYVTDTKE…DGSCSCRDFW (95 aa)) are type DYW motif.

Belongs to the PPR family. PCMP-H subfamily.

The chain is Pentatricopeptide repeat-containing protein At3g62890 (PCMP-H82) from Arabidopsis thaliana (Mouse-ear cress).